We begin with the raw amino-acid sequence, 427 residues long: Trigger factor (427 aa).

In terms of domain architecture, PPIase FKBP-type spans 163-248; sequence GDTVVIDFVG…IHEVKTKEVP (86 aa).

Belongs to the FKBP-type PPIase family. Tig subfamily.

Its subcellular location is the cytoplasm. The catalysed reaction is [protein]-peptidylproline (omega=180) = [protein]-peptidylproline (omega=0). Involved in protein export. Acts as a chaperone by maintaining the newly synthesized protein in an open conformation. Functions as a peptidyl-prolyl cis-trans isomerase. The polypeptide is Trigger factor (Streptococcus agalactiae serotype III (strain NEM316)).